We begin with the raw amino-acid sequence, 878 residues long: Serine/threonine-protein kinase N3 (878 aa).

3 REM-1 domains span residues 2–77, 86–165, and 169–238; these read EHRK…QVLL, SEPQ…SGSP, and PDLL…RLPP. S164 bears the Phosphoserine mark. The interval 461–525 is disordered; the sequence is PNTASPPKGR…TPCTKRPHMD (65 aa). In terms of domain architecture, Protein kinase spans 548-807; it reads FRCLAVLGRG…AEEIKVQPFF (260 aa). ATP-binding positions include 554 to 562 and K577; that span reads LGRGHFGKV. The active-site Proton acceptor is D673. Residues T707, T711, and T849 each carry the phosphothreonine modification. The AGC-kinase C-terminal domain maps to 808-878; sequence RTTNWQALLA…DFVSEQFLES (71 aa).

It belongs to the protein kinase superfamily. AGC Ser/Thr protein kinase family. PKC subfamily. Post-translationally, autophosphorylated.

The protein resides in the nucleus. Its subcellular location is the cytoplasm. It is found in the perinuclear region. It carries out the reaction L-seryl-[protein] + ATP = O-phospho-L-seryl-[protein] + ADP + H(+). It catalyses the reaction L-threonyl-[protein] + ATP = O-phospho-L-threonyl-[protein] + ADP + H(+). Its activity is regulated as follows. Two specific sites, Thr-707 (activation loop of the kinase domain) and Thr-849 (turn motif), need to be phosphorylated for its full activation. Its function is as follows. Contributes to invasiveness in malignant prostate cancer. The chain is Serine/threonine-protein kinase N3 (Pkn3) from Mus musculus (Mouse).